A 512-amino-acid polypeptide reads, in one-letter code: Chitin synthase regulatory factor 2 (512 aa).

Sel1-like repeat units follow at residues Ser-224–His-260, Val-261–His-296, Val-297–Asp-333, Pro-337–Leu-377, Lys-378–Asn-414, and Pro-415–His-452. Cys-509 bears the Cysteine methyl ester mark. Cys-509 carries the S-farnesyl cysteine lipid modification. The propeptide at Ile-510–Ser-512 is removed in mature form.

It is found in the membrane. Its function is as follows. Involved in chitin biosynthesis. The chain is Chitin synthase regulatory factor 2 (chr2) from Schizosaccharomyces pombe (strain 972 / ATCC 24843) (Fission yeast).